An 86-amino-acid polypeptide reads, in one-letter code: Large ribosomal subunit protein bL27 (86 aa).

The tract at residues 1–24 (MAHKKAGGSSRNGRDSEGRRLGVK) is disordered.

This sequence belongs to the bacterial ribosomal protein bL27 family.

This is Large ribosomal subunit protein bL27 from Magnetococcus marinus (strain ATCC BAA-1437 / JCM 17883 / MC-1).